We begin with the raw amino-acid sequence, 294 residues long: 4-diphosphocytidyl-2-C-methyl-D-erythritol kinase (294 aa).

The active site involves Lys-23. 106 to 116 (PMGGGLGGGSS) contacts ATP. Asp-148 is an active-site residue.

It belongs to the GHMP kinase family. IspE subfamily.

It carries out the reaction 4-CDP-2-C-methyl-D-erythritol + ATP = 4-CDP-2-C-methyl-D-erythritol 2-phosphate + ADP + H(+). It functions in the pathway isoprenoid biosynthesis; isopentenyl diphosphate biosynthesis via DXP pathway; isopentenyl diphosphate from 1-deoxy-D-xylulose 5-phosphate: step 3/6. Catalyzes the phosphorylation of the position 2 hydroxy group of 4-diphosphocytidyl-2C-methyl-D-erythritol. The protein is 4-diphosphocytidyl-2-C-methyl-D-erythritol kinase of Nitrosospira multiformis (strain ATCC 25196 / NCIMB 11849 / C 71).